We begin with the raw amino-acid sequence, 253 residues long: Tryptophan synthase alpha chain (253 aa).

Active-site proton acceptor residues include glutamate 47 and aspartate 58.

This sequence belongs to the TrpA family. As to quaternary structure, tetramer of two alpha and two beta chains.

It catalyses the reaction (1S,2R)-1-C-(indol-3-yl)glycerol 3-phosphate + L-serine = D-glyceraldehyde 3-phosphate + L-tryptophan + H2O. The protein operates within amino-acid biosynthesis; L-tryptophan biosynthesis; L-tryptophan from chorismate: step 5/5. The alpha subunit is responsible for the aldol cleavage of indoleglycerol phosphate to indole and glyceraldehyde 3-phosphate. This Lactococcus lactis subsp. cremoris (strain MG1363) protein is Tryptophan synthase alpha chain.